The sequence spans 650 residues: MQKSADKSLKDRYLDLLSQQFNTKEELATEIINLESILELPKGTEHFVSDLHGEFHAFQHVLRNGSGNVRSKINDIFQDTLTRKEINEFSALVYYPEEKLKIIKNSFSSKSELNEWYITTINRLIKLITYASSKYTRTKLRKSLPKNYVFIIEELLYKSNKYNNKHSYYETLINQIIELEQSDDLIIGLSFTVQHLVVDHLHVVGDIYDRGPEPDKIMETLIDYPSVDIQWGNHDVLWIGAYAGSKVCLANLLRICARYDNLDIIEDAYGINLRPLLTLAEKHYDGKNKAFRPKNAEGLTELELEQITKIHQAIAIIQFKLEAPIIKRRPTFEMEERLVLESINYEKNEATLYGKTYPLENTCFQTIDPNGPNKLTDEESEVMDKLLLSVQQSEKLKRHMTFLMQKGTLYLPYNGNLLIHGCIPVDENGEMESMVINDVKCYGRDLLDHFEDYVREAFDHKDIQDDLATDLVWYLWTGKYSSLFGKRAMTTFERYFIKDKTAHKETKNPYYHLREDVNMCKKMLKDFGLDPEQGHIINGHTPVKEIDGEDPIKAEGKMIVIDGGFSKAYQSTTGIAGYTLLYNSFGMQLVAHQHFNSKKHVLLNGADELSIRRVVDKELQRQKIRHTNTGQDIQEKIDILKELMHDRYVN.

This sequence belongs to the FBPase class 3 family. Requires Mn(2+) as cofactor.

It carries out the reaction beta-D-fructose 1,6-bisphosphate + H2O = beta-D-fructose 6-phosphate + phosphate. It functions in the pathway carbohydrate biosynthesis; gluconeogenesis. This chain is Fructose-1,6-bisphosphatase class 3, found in Staphylococcus saprophyticus subsp. saprophyticus (strain ATCC 15305 / DSM 20229 / NCIMB 8711 / NCTC 7292 / S-41).